A 404-amino-acid chain; its full sequence is Glycosyltransferase GlyB (404 aa).

The segment at Met1–Arg267 is GT8 domain. UDP is bound by residues Asn9–Tyr14 and Asp103–Ser104. Residues Asp103, Asp105, and His228 each contribute to the Mn(2+) site. Residue His228–Lys233 coordinates UDP.

This sequence in the N-terminal section; belongs to the glycosyltransferase 8 family.

Functionally, may be involved in the polymorphic O-glycosylation of the serine-rich repeat protein PsrP. Has equal hydrolytic activity against both UDP-galactose and UDP-glucose; no glycosyltransferase activity has been seen with tested substrates. The protein is Glycosyltransferase GlyB of Streptococcus pneumoniae serotype 4 (strain ATCC BAA-334 / TIGR4).